The following is a 199-amino-acid chain: Molybdenum cofactor guanylyltransferase (199 aa).

GTP-binding positions include 12–14 (LAG), Lys-25, Asn-53, Asp-71, and Asp-101. Position 101 (Asp-101) interacts with Mg(2+).

The protein belongs to the MobA family. Monomer. Mg(2+) is required as a cofactor.

The protein localises to the cytoplasm. It catalyses the reaction Mo-molybdopterin + GTP + H(+) = Mo-molybdopterin guanine dinucleotide + diphosphate. In terms of biological role, transfers a GMP moiety from GTP to Mo-molybdopterin (Mo-MPT) cofactor (Moco or molybdenum cofactor) to form Mo-molybdopterin guanine dinucleotide (Mo-MGD) cofactor. The protein is Molybdenum cofactor guanylyltransferase of Cupriavidus taiwanensis (strain DSM 17343 / BCRC 17206 / CCUG 44338 / CIP 107171 / LMG 19424 / R1) (Ralstonia taiwanensis (strain LMG 19424)).